The primary structure comprises 236 residues: 2,3,4,5-tetrahydropyridine-2,6-dicarboxylate N-acetyltransferase (236 aa).

The protein belongs to the transferase hexapeptide repeat family. DapH subfamily.

The enzyme catalyses (S)-2,3,4,5-tetrahydrodipicolinate + acetyl-CoA + H2O = L-2-acetamido-6-oxoheptanedioate + CoA. Its pathway is amino-acid biosynthesis; L-lysine biosynthesis via DAP pathway; LL-2,6-diaminopimelate from (S)-tetrahydrodipicolinate (acetylase route): step 1/3. Its function is as follows. Catalyzes the transfer of an acetyl group from acetyl-CoA to tetrahydrodipicolinate. This Bacillus velezensis (strain DSM 23117 / BGSC 10A6 / LMG 26770 / FZB42) (Bacillus amyloliquefaciens subsp. plantarum) protein is 2,3,4,5-tetrahydropyridine-2,6-dicarboxylate N-acetyltransferase.